A 391-amino-acid chain; its full sequence is Terminal nucleotidyltransferase 5C (391 aa).

Belongs to the TENT family. Interacts with BCCIP and PABPC1; the interaction has no effect on TENT5C poly(A) polymerase function. Interacts with PLK4; this interaction leads to the TENT5C recruitment into the centrosome.

The protein resides in the nucleus. It localises to the cytoplasm. It is found in the cytoskeleton. Its subcellular location is the microtubule organizing center. The protein localises to the centrosome. The catalysed reaction is RNA(n) + ATP = RNA(n)-3'-adenine ribonucleotide + diphosphate. Its function is as follows. Catalyzes the transfer of one adenosine molecule from an ATP to an mRNA poly(A) tail bearing a 3'-OH terminal group and enhances mRNA stability and gene expression. Can also elongate RNA oligos ending with uridine molecule, provided that the sequence is adenosine-rich. Mainly targets mRNAs encoding endoplasmic reticulum-targeted protein. The protein is Terminal nucleotidyltransferase 5C of Macaca fascicularis (Crab-eating macaque).